A 178-amino-acid polypeptide reads, in one-letter code: NADH-quinone oxidoreductase subunit B (178 aa).

[4Fe-4S] cluster-binding residues include Cys45, Cys46, Cys111, and Cys140.

It belongs to the complex I 20 kDa subunit family. As to quaternary structure, NDH-1 is composed of 15 different subunits. Subunits NuoB, C, D, E, F, and G constitute the peripheral sector of the complex. The cofactor is [4Fe-4S] cluster.

It localises to the cell membrane. It catalyses the reaction a quinone + NADH + 5 H(+)(in) = a quinol + NAD(+) + 4 H(+)(out). In terms of biological role, NDH-1 shuttles electrons from NADH, via FMN and iron-sulfur (Fe-S) centers, to quinones in the respiratory chain. The immediate electron acceptor for the enzyme in this species is believed to be a menaquinone. Couples the redox reaction to proton translocation (for every two electrons transferred, four hydrogen ions are translocated across the cytoplasmic membrane), and thus conserves the redox energy in a proton gradient. This chain is NADH-quinone oxidoreductase subunit B, found in Deinococcus deserti (strain DSM 17065 / CIP 109153 / LMG 22923 / VCD115).